Reading from the N-terminus, the 764-residue chain is Myotubularin-related protein 10-B (764 aa).

Positions 208-649 (FESYSDWDRE…THIQIWKLCY (442 aa)) constitute a Myotubularin phosphatase domain.

It belongs to the protein-tyrosine phosphatase family. Non-receptor class myotubularin subfamily.

The polypeptide is Myotubularin-related protein 10-B (mtmr10-b) (Xenopus laevis (African clawed frog)).